Reading from the N-terminus, the 291-residue chain is Phosphoribosylaminoimidazole-succinocarboxamide synthase (291 aa).

The protein belongs to the SAICAR synthetase family.

It carries out the reaction 5-amino-1-(5-phospho-D-ribosyl)imidazole-4-carboxylate + L-aspartate + ATP = (2S)-2-[5-amino-1-(5-phospho-beta-D-ribosyl)imidazole-4-carboxamido]succinate + ADP + phosphate + 2 H(+). Its pathway is purine metabolism; IMP biosynthesis via de novo pathway; 5-amino-1-(5-phospho-D-ribosyl)imidazole-4-carboxamide from 5-amino-1-(5-phospho-D-ribosyl)imidazole-4-carboxylate: step 1/2. The sequence is that of Phosphoribosylaminoimidazole-succinocarboxamide synthase (ADE1) from Candida maltosa (Yeast).